A 189-amino-acid chain; its full sequence is H/ACA ribonucleoprotein complex subunit 1-like protein 2 (189 aa).

Gly residues predominate over residues 1–12 (MRPPRGGGSFRG). Disordered stretches follow at residues 1-39 (MRPP…NYDE) and 129-189 (RFLP…RGRA). Over residues 162–177 (GRGAPRGASRGFQPRG) the composition is skewed to low complexity.

This sequence belongs to the GAR1 family. As to quaternary structure, component of the small nucleolar ribonucleoprotein particle containing H/ACA-type snoRNAs (H/ACA snoRNPs).

The protein resides in the nucleus. It localises to the nucleolus. Required for ribosome biogenesis. Part of a complex which catalyzes pseudouridylation of rRNA. This involves the isomerization of uridine such that the ribose is subsequently attached to C5, instead of the normal N1. Pseudouridine ('psi') residues may serve to stabilize the conformation of rRNAs. The chain is H/ACA ribonucleoprotein complex subunit 1-like protein 2 from Arabidopsis thaliana (Mouse-ear cress).